The sequence spans 442 residues: tRNA-2-methylthio-N(6)-dimethylallyladenosine synthase (442 aa).

The region spanning 2 to 120 (KKVFIRTFGC…LPKMIVDKET (119 aa)) is the MTTase N-terminal domain. [4Fe-4S] cluster-binding residues include cysteine 11, cysteine 49, cysteine 83, cysteine 157, cysteine 161, and cysteine 164. In terms of domain architecture, Radical SAM core spans 143-375 (RVEGGAAFVS…NEVIEAETAR (233 aa)). One can recognise a TRAM domain in the interval 378–441 (QTMIGTVQRC…TFSLRGKVVE (64 aa)).

The protein belongs to the methylthiotransferase family. MiaB subfamily. In terms of assembly, monomer. It depends on [4Fe-4S] cluster as a cofactor.

Its subcellular location is the cytoplasm. The catalysed reaction is N(6)-dimethylallyladenosine(37) in tRNA + (sulfur carrier)-SH + AH2 + 2 S-adenosyl-L-methionine = 2-methylsulfanyl-N(6)-dimethylallyladenosine(37) in tRNA + (sulfur carrier)-H + 5'-deoxyadenosine + L-methionine + A + S-adenosyl-L-homocysteine + 2 H(+). Catalyzes the methylthiolation of N6-(dimethylallyl)adenosine (i(6)A), leading to the formation of 2-methylthio-N6-(dimethylallyl)adenosine (ms(2)i(6)A) at position 37 in tRNAs that read codons beginning with uridine. The sequence is that of tRNA-2-methylthio-N(6)-dimethylallyladenosine synthase from Neisseria meningitidis serogroup C (strain 053442).